We begin with the raw amino-acid sequence, 265 residues long: Mlc titration factor A (265 aa).

Positions 111, 148, 152, and 211 each coordinate Zn(2+).

The protein belongs to the MtfA family. In terms of assembly, interacts with Mlc. The cofactor is Zn(2+).

Its subcellular location is the cytoplasm. In terms of biological role, involved in the modulation of the activity of the glucose-phosphotransferase system (glucose-PTS). Interacts with the transcriptional repressor Mlc, preventing its interaction with DNA and leading to the modulation of expression of genes regulated by Mlc, including ptsG, which encodes the PTS system glucose-specific EIICB component. Functionally, shows zinc-dependent metallopeptidase activity. This is Mlc titration factor A from Salmonella gallinarum (strain 287/91 / NCTC 13346).